A 478-amino-acid polypeptide reads, in one-letter code: MPYILLDCDKFIPERMKHTYVYDPEENILPACNTNTVPGDMTERGCAFAGSRGVVGGPIKDAIHMVHGPIGCAYYTWGTRRALSDNEFHRRYCFCTDMQESDIVYGGEKTLEKASLEVMEEFPEASGTFIYTTCPTALIGDNVDAIARNIEKATKKPAIAINSPGFCGVSQSKGHHVFNMTFYKWLKLKRKEFPEKCMPEEEKTPYDVALIGDYNMDWDVAVIKPLLEKIGCRYVTTFTGNASLDELFQLMDVKLNIVHCQRSAEYIAQMINDGFDIPYTRATFFGLSDIAESLYDVAKALDLPKERVDQVIKEEMEAIQPKLDYYKSKLEGKTCMVYVGGPRTWHWIKAMKDLGVEYVAACCTFSHTDDYEKMNKNFKEAGIKDILVIDAPNEPELEEAVKTLDPDFMLVGLKERYLFRKYGVPTINSHSYEEGPYAGYRGFVNFARDVYKAVCHPVWNVLKEGEDKFKNFKGDLNE.

C46, C72, and C134 together coordinate [8Fe-7S] cluster. Positions 260 and 430 each coordinate [7Fe-Mo-9S-C-homocitryl] cluster.

The protein belongs to the NifD/NifK/NifE/NifN family. In terms of assembly, tetramer of two alpha and two beta chains. Forms complex with the iron protein (nitrogenase component 2). Requires [8Fe-7S] cluster as cofactor. The cofactor is [7Fe-Mo-9S-C-homocitryl] cluster.

It catalyses the reaction N2 + 8 reduced [2Fe-2S]-[ferredoxin] + 16 ATP + 16 H2O = H2 + 8 oxidized [2Fe-2S]-[ferredoxin] + 2 NH4(+) + 16 ADP + 16 phosphate + 6 H(+). Functionally, this molybdenum-iron protein is part of the nitrogenase complex that catalyzes the key enzymatic reactions in nitrogen fixation. This is Nitrogenase molybdenum-iron protein alpha chain (nifD) from Methanothermococcus thermolithotrophicus (Methanococcus thermolithotrophicus).